Here is a 295-residue protein sequence, read N- to C-terminus: F-box only protein 8 (295 aa).

Positions 35-80 (TWVARYIPQDLLIEILTRLPPKSVMRFKCVSKFWSSLLSSRYFCNR) constitute an F-box domain.

This chain is F-box only protein 8 (FBX8), found in Arabidopsis thaliana (Mouse-ear cress).